We begin with the raw amino-acid sequence, 363 residues long: tRNA N6-adenosine threonylcarbamoyltransferase (363 aa).

The Fe cation site is built by His-121 and His-125. Substrate-binding positions include 143–147, Asp-176, Gly-189, and Asn-287; that span reads LASGG. A Fe cation-binding site is contributed by Asp-315.

It belongs to the KAE1 / TsaD family. The cofactor is Fe(2+).

It localises to the cytoplasm. It carries out the reaction L-threonylcarbamoyladenylate + adenosine(37) in tRNA = N(6)-L-threonylcarbamoyladenosine(37) in tRNA + AMP + H(+). In terms of biological role, required for the formation of a threonylcarbamoyl group on adenosine at position 37 (t(6)A37) in tRNAs that read codons beginning with adenine. Is involved in the transfer of the threonylcarbamoyl moiety of threonylcarbamoyl-AMP (TC-AMP) to the N6 group of A37, together with TsaE and TsaB. TsaD likely plays a direct catalytic role in this reaction. In Rhodopseudomonas palustris (strain ATCC BAA-98 / CGA009), this protein is tRNA N6-adenosine threonylcarbamoyltransferase.